The chain runs to 136 residues: Large-conductance mechanosensitive channel (136 aa).

Helical transmembrane passes span 9–29 (AFAVKGNVVDMAVGIIIGAAF) and 78–98 (FIQTVIDFLIIAFAIFIGVKA).

This sequence belongs to the MscL family. As to quaternary structure, homopentamer.

The protein resides in the cell inner membrane. Functionally, channel that opens in response to stretch forces in the membrane lipid bilayer. May participate in the regulation of osmotic pressure changes within the cell. This chain is Large-conductance mechanosensitive channel, found in Azotobacter vinelandii (strain DJ / ATCC BAA-1303).